The chain runs to 861 residues: Integrator complex subunit 6-like (861 aa).

One can recognise a VWFA domain in the interval 3–227 (ILLFLIDTSA…QCLESLVQKV (225 aa)). Serine 617 carries the phosphoserine modification.

This chain is Integrator complex subunit 6-like (Ints6l), found in Mus musculus (Mouse).